The chain runs to 273 residues: Outer surface protein A (273 aa).

Residues 1 to 16 (MKKYLLGIGLILALIA) form the signal peptide. A lipid anchor (N-palmitoyl cysteine) is attached at Cys-17. Cys-17 carries S-diacylglycerol cysteine lipidation.

The protein belongs to the OspA lipoprotein family.

It is found in the cell outer membrane. It localises to the cell surface. The chain is Outer surface protein A from Borreliella burgdorferi (Lyme disease spirochete).